Consider the following 470-residue polypeptide: Calcitonin gene-related peptide type 1 receptor (470 aa).

An N-terminal signal peptide occupies residues 1–23 (MTASCWTICLFLLGSVTEFIVLA). Topologically, residues 24–147 (SPEVNESQQQ…HTTEGRRTAM (124 aa)) are extracellular. 4 N-linked (GlcNAc...) asparagine glycosylation sites follow: N28, N74, N126, and N131. 3 cysteine pairs are disulfide-bonded: C56–C82, C73–C113, and C96–C135. Residues 148–172 (NLFYLALIGHGLSLTSLFISLGIFF) form a helical membrane-spanning segment. The Cytoplasmic portion of the chain corresponds to 173-183 (HFKSLSCQRIT). The chain crosses the membrane as a helical span at residues 184 to 206 (LHKNLFFSFVLNSIITIIWLTAV). At 207-217 (ANNQELVQQNP) the chain is on the extracellular side. Residues 218 to 246 (ISCKISQFIHLYIFGCNYFWMLCEGIYLH) traverse the membrane as a helical segment. Topologically, residues 247-260 (TLIVVAVFAEKQHL) are cytoplasmic. The chain crosses the membrane as a helical span at residues 261-281 (MWYYLLGWGFPLIPATIHAVA). Over 282–297 (RSYYYNDNCWISSNTS) the chain is Extracellular. The N-linked (GlcNAc...) asparagine glycan is linked to N295. Residues 298-322 (LLYIIHGPICAAMLVNLFFLLNIVR) traverse the membrane as a helical segment. At 323-337 (VLITKLKVTHQAKSS) the chain is on the cytoplasmic side. Residues 338-359 (LYMKAVRATLILVPLLGIQYVL) traverse the membrane as a helical segment. The Extracellular segment spans residues 360–374 (LPYKPSGRVSAEIYD). The helical transmembrane segment at 375-395 (YIMHILMHYQGLLVATIFCFF) threads the bilayer. Topologically, residues 396-470 (NGEVQAVLRR…AIIKPENPFA (75 aa)) are cytoplasmic.

The protein belongs to the G-protein coupled receptor 2 family.

Its subcellular location is the cell membrane. In terms of biological role, may function as G protein-coupled receptor for calcitonin-gene-related peptides and adrenomedullin. Specificity may be modulated by accessory proteins. May activate cAMP-dependent pathway. This is Calcitonin gene-related peptide type 1 receptor (calcrla) from Danio rerio (Zebrafish).